The following is a 213-amino-acid chain: Thymidylate kinase (213 aa).

10-17 (GLEGAGKT) serves as a coordination point for ATP.

Belongs to the thymidylate kinase family.

It carries out the reaction dTMP + ATP = dTDP + ADP. Its function is as follows. Phosphorylation of dTMP to form dTDP in both de novo and salvage pathways of dTTP synthesis. This chain is Thymidylate kinase, found in Klebsiella pneumoniae (strain 342).